The chain runs to 440 residues: Chromosome partition protein MukF (440 aa).

The tract at residues 208 to 236 (LSETSGTLRELQDTLEAAGDKLQANLLRI) is leucine-zipper.

This sequence belongs to the MukF family. Interacts, and probably forms a ternary complex, with MukE and MukB via its C-terminal region. The complex formation is stimulated by calcium or magnesium. It is required for an interaction between MukE and MukB.

It is found in the cytoplasm. The protein localises to the nucleoid. Functionally, involved in chromosome condensation, segregation and cell cycle progression. May participate in facilitating chromosome segregation by condensation DNA from both sides of a centrally located replisome during cell division. Not required for mini-F plasmid partitioning. Probably acts via its interaction with MukB and MukE. Overexpression results in anucleate cells. It has a calcium binding activity. This chain is Chromosome partition protein MukF, found in Shigella boydii serotype 4 (strain Sb227).